Here is a 384-residue protein sequence, read N- to C-terminus: UDP-4-amino-4-deoxy-L-arabinose--oxoglutarate aminotransferase (384 aa).

Lys-182 is modified (N6-(pyridoxal phosphate)lysine).

The protein belongs to the DegT/DnrJ/EryC1 family. ArnB subfamily. As to quaternary structure, homodimer. Requires pyridoxal 5'-phosphate as cofactor.

It catalyses the reaction UDP-4-amino-4-deoxy-beta-L-arabinose + 2-oxoglutarate = UDP-beta-L-threo-pentopyranos-4-ulose + L-glutamate. Its pathway is nucleotide-sugar biosynthesis; UDP-4-deoxy-4-formamido-beta-L-arabinose biosynthesis; UDP-4-deoxy-4-formamido-beta-L-arabinose from UDP-alpha-D-glucuronate: step 2/3. It participates in bacterial outer membrane biogenesis; lipopolysaccharide biosynthesis. In terms of biological role, catalyzes the conversion of UDP-4-keto-arabinose (UDP-Ara4O) to UDP-4-amino-4-deoxy-L-arabinose (UDP-L-Ara4N). The modified arabinose is attached to lipid A and is required for resistance to polymyxin and cationic antimicrobial peptides. The protein is UDP-4-amino-4-deoxy-L-arabinose--oxoglutarate aminotransferase of Yersinia pseudotuberculosis serotype O:1b (strain IP 31758).